A 454-amino-acid polypeptide reads, in one-letter code: Laccase-3 (454 aa).

2 consecutive Plastocyanin-like domains span residues 1-95 and 101-252; these read PGPT…GPAT and DLGV…YSGA. N-linked (GlcNAc...) asparagine glycosylation is present at N24. 4 residues coordinate Cu cation: H29, H31, H73, and H75. N138, N169, N218, N314, and N334 each carry an N-linked (GlcNAc...) asparagine glycan. One can recognise a Plastocyanin-like 3 domain in the interval 319-454; that stretch reads DVDWKKPILQ…SEGLAVQFQG (136 aa). Residues H375, H378, and H380 each coordinate Cu cation. N395 carries an N-linked (GlcNAc...) asparagine glycan. Residues H437, C438, H439, and H443 each contribute to the Cu cation site.

Belongs to the multicopper oxidase family. It depends on Cu cation as a cofactor.

It localises to the secreted. It carries out the reaction 4 hydroquinone + O2 = 4 benzosemiquinone + 2 H2O. Functionally, lignin degradation and detoxification of lignin-derived products. This is Laccase-3 (lcc3) from Botryotinia fuckeliana (Noble rot fungus).